A 100-amino-acid polypeptide reads, in one-letter code: Large ribosomal subunit protein bL21 (100 aa).

It belongs to the bacterial ribosomal protein bL21 family. As to quaternary structure, part of the 50S ribosomal subunit. Contacts protein L20.

Functionally, this protein binds to 23S rRNA in the presence of protein L20. In Mycoplasma pneumoniae (strain ATCC 29342 / M129 / Subtype 1) (Mycoplasmoides pneumoniae), this protein is Large ribosomal subunit protein bL21.